Here is a 268-residue protein sequence, read N- to C-terminus: Small ribosomal subunit protein eS1 (268 aa).

The tract at residues 1 to 21 (MAVGKNKGLSKGGKKGGKKKV) is disordered.

This sequence belongs to the eukaryotic ribosomal protein eS1 family. Component of the small ribosomal subunit. Mature ribosomes consist of a small (40S) and a large (60S) subunit. The 40S subunit contains about 33 different proteins and 1 molecule of RNA (18S). The 60S subunit contains about 49 different proteins and 3 molecules of RNA (28S, 5.8S and 5S).

It is found in the cytoplasm. In terms of biological role, essential for oogenesis; required for late follicle cell development. The chain is Small ribosomal subunit protein eS1 from Drosophila mojavensis (Fruit fly).